Consider the following 469-residue polypeptide: 6-phospho-beta-galactosidase (469 aa).

Glutamine 19, histidine 116, asparagine 159, glutamate 160, and asparagine 297 together coordinate D-galactose 6-phosphate. Catalysis depends on glutamate 160, which acts as the Proton donor. Residue glutamate 375 is the Nucleophile of the active site. Residues serine 428, tryptophan 429, lysine 435, and tyrosine 437 each contribute to the D-galactose 6-phosphate site.

Belongs to the glycosyl hydrolase 1 family.

It catalyses the reaction a 6-phospho-beta-D-galactoside + H2O = D-galactose 6-phosphate + an alcohol. It participates in carbohydrate metabolism; lactose degradation; D-galactose 6-phosphate and beta-D-glucose from lactose 6-phosphate: step 1/1. This chain is 6-phospho-beta-galactosidase, found in Streptococcus equi subsp. zooepidemicus (strain H70).